The chain runs to 802 residues: DNA mismatch repair protein MutS (802 aa).

617 to 624 lines the ATP pocket; the sequence is GPNMGGKS.

The protein belongs to the DNA mismatch repair MutS family.

Functionally, this protein is involved in the repair of mismatches in DNA. It is possible that it carries out the mismatch recognition step. This protein has a weak ATPase activity. The polypeptide is DNA mismatch repair protein MutS (Buchnera aphidicola subsp. Acyrthosiphon pisum (strain 5A)).